We begin with the raw amino-acid sequence, 381 residues long: V-type proton ATPase subunit C 1-B (381 aa).

An N-acetylthreonine modification is found at Thr-2.

Belongs to the V-ATPase C subunit family. As to quaternary structure, V-ATPase is a heteromultimeric enzyme made up of two complexes: the ATP-hydrolytic V1 complex and the proton translocation V0 complex. The V1 complex consists of three catalytic AB heterodimers that form a heterohexamer, three peripheral stalks each consisting of EG heterodimers, one central rotor including subunits D and F, and the regulatory subunits C and H. The proton translocation complex V0 consists of the proton transport subunit a, a ring of proteolipid subunits c9c'', rotary subunit d, subunits e and f, and two accessory subunits.

In terms of biological role, subunit of the V1 complex of vacuolar(H+)-ATPase (V-ATPase), a multisubunit enzyme composed of a peripheral complex (V1) that hydrolyzes ATP and a membrane integral complex (V0) that translocates protons. V-ATPase is responsible for acidifying and maintaining the pH of intracellular compartments and in some cell types, is targeted to the plasma membrane, where it is responsible for acidifying the extracellular environment. Subunit C is necessary for the assembly of the catalytic sector of the enzyme and is likely to have a specific function in its catalytic activity. The chain is V-type proton ATPase subunit C 1-B (atp6v1c1b) from Danio rerio (Zebrafish).